A 372-amino-acid polypeptide reads, in one-letter code: NADH-quinone oxidoreductase subunit D (372 aa).

Belongs to the complex I 49 kDa subunit family. As to quaternary structure, NDH-1 is composed of 14 different subunits. Subunits NuoB, C, D, E, F, and G constitute the peripheral sector of the complex.

The protein localises to the cell inner membrane. The enzyme catalyses a quinone + NADH + 5 H(+)(in) = a quinol + NAD(+) + 4 H(+)(out). Its function is as follows. NDH-1 shuttles electrons from NADH, via FMN and iron-sulfur (Fe-S) centers, to quinones in the respiratory chain. The immediate electron acceptor for the enzyme in this species is believed to be ubiquinone. Couples the redox reaction to proton translocation (for every two electrons transferred, four hydrogen ions are translocated across the cytoplasmic membrane), and thus conserves the redox energy in a proton gradient. The chain is NADH-quinone oxidoreductase subunit D from Desulfotalea psychrophila (strain LSv54 / DSM 12343).